Here is a 509-residue protein sequence, read N- to C-terminus: MVDGVMILPVLIMIALPSPSMEDEKPKVNPKLYMCVCEGLSCGNEDHCEGQQCFSSLSINDGFHVYQKGCFQVYEQGKMTCKTPPSPGQAVECCQGDWCNRNITAQLPTKGKSFPGTQNFHLEVGLIILSVVFAVCLLACLLGVALRKFKRRNQERLNPRDVEYGTIEGLITTNVGDSTLADLLDHSCTSGSGSGLPFLVQRTVARQITLLECVGKGRYGEVWRGSWQGENVAVKIFSSRDEKSWFRETELYNTVMLRHENILGFIASDMTSRHSSTQLWLITHYHEMGSLYDYLQLTTLDTVSCLRIVLSIASGLAHLHIEIFGTQGKPAIAHRDLKSKNILVKKNGQCCIADLGLAVMHSQSTNQLDVGNNPRVGTKRYMAPEVLDETIQVDCFDSYKRVDIWAFGLVLWEVARRMVSNGIVEDYKPPFYDVVPNDPSFEDMRKVVCVDQQRPNIPNRWFSDPTLTSLAKLMKECWYQNPSARLTALRIKKTLTKIDNSLDKLKTDC.

The signal sequence occupies residues 1-20 (MVDGVMILPVLIMIALPSPS). The Extracellular segment spans residues 21–123 (MEDEKPKVNP…FPGTQNFHLE (103 aa)). N-linked (GlcNAc...) asparagine glycosylation is present at N102. The chain crosses the membrane as a helical span at residues 124–146 (VGLIILSVVFAVCLLACLLGVAL). The Cytoplasmic segment spans residues 147 to 509 (RKFKRRNQER…NSLDKLKTDC (363 aa)). The region spanning 178-207 (STLADLLDHSCTSGSGSGLPFLVQRTVARQ) is the GS domain. The Protein kinase domain maps to 208 to 502 (ITLLECVGKG…KTLTKIDNSL (295 aa)). Residues 214–222 (VGKGRYGEV) and K235 contribute to the ATP site. D336 functions as the Proton acceptor in the catalytic mechanism. At S501 the chain carries Phosphoserine.

This sequence belongs to the protein kinase superfamily. TKL Ser/Thr protein kinase family. TGFB receptor subfamily. In terms of assembly, interacts with FKBP1A. Interacts with FCHO1. Interacts with CLU. Interacts with type II receptors AMHR2 and ACVR2A. Interacts with BMP7. Interacts with GDF2/BMP9. Interacts with BMP6 (when glycosylated); the interaction may induce HAMP expression. Interacts with TSC22D1/TSC-22. It depends on Mg(2+) as a cofactor. Requires Mn(2+) as cofactor. As to expression, expressed in normal parenchymal cells, endothelial cells, fibroblasts and tumor-derived epithelial cells.

It localises to the membrane. It carries out the reaction L-threonyl-[receptor-protein] + ATP = O-phospho-L-threonyl-[receptor-protein] + ADP + H(+). The enzyme catalyses L-seryl-[receptor-protein] + ATP = O-phospho-L-seryl-[receptor-protein] + ADP + H(+). In terms of biological role, bone morphogenetic protein (BMP) type I receptor that is involved in a wide variety of biological processes, including bone, heart, cartilage, nervous, and reproductive system development and regulation. As a type I receptor, forms heterotetrameric receptor complexes with the type II receptors AMHR2, ACVR2A or ACVR2B. Upon binding of ligands such as BMP7 or GDF2/BMP9 to the heteromeric complexes, type II receptors transphosphorylate ACVR1 intracellular domain. In turn, ACVR1 kinase domain is activated and subsequently phosphorylates SMAD1/5/8 proteins that transduce the signal. In addition to its role in mediating BMP pathway-specific signaling, suppresses TGFbeta/activin pathway signaling by interfering with the binding of activin to its type II receptor. Besides canonical SMAD signaling, can activate non-canonical pathways such as p38 mitogen-activated protein kinases/MAPKs. May promote the expression of HAMP, potentially via its interaction with BMP6. This is Activin receptor type-1 (ACVR1) from Homo sapiens (Human).